The chain runs to 96 residues: Large ribosomal subunit protein bL27 (96 aa).

The segment at 12 to 33 (HKGGGSSANGRNSAGRRLGAKA) is disordered. Residues 19–28 (ANGRNSAGRR) show a composition bias toward low complexity.

It belongs to the bacterial ribosomal protein bL27 family.

The chain is Large ribosomal subunit protein bL27 from Lactobacillus helveticus (strain DPC 4571).